A 563-amino-acid chain; its full sequence is MDIKRTILIVALAIVTYVGVLKWNQDYGQAAMPTQNVAASTTAPGIPDTAAGTNGSASADVPSASATANTAAAPLETPAVASKDLIHVKTDVLDLAIDPVGGDVVQLRLPLYPRRQDRPDVPFQLFDNGGERTFLAQSGLTGTNGPDARAAGRPVYTSTQKTYQLADGQDTMVVDLKFSENGVNYIKRFTFKRGLYDLVMTYVVDNQSAQPWAGNLFAQLKRDASSDPSSTTATGTATYLGAALWTAAEPYKKVSMKDIDKGQIKETVQGGWVAWLQHYFVTAWIPDHNATNAVQTRKDSQGNYIIGFTSPTLSVAPGAQGETSATLYAGPKSQAVLKELSPGLELTVDYGFLWFIAQPIFWLLQHIHAILGNWGWSIIVLTMLIKGLFFPLSAASYKSMARMRAVAPKLALLKEQHGDDRQKMSQAMMELYKKEKINPLGGCLPILVQMPVFLSLYWVLLESVEMRQAPWILWITDLSIKDPFFILPIIMGATMFIQQRLNPTPPDPMQAKVMKMMPIIFTFFFLWFPAGLVLYWVVNNTLSIAQQAYITRKIEAATKKAAA.

Residues 1–21 (MDIKRTILIVALAIVTYVGVL) form a helical membrane-spanning segment. The tract at residues 43–62 (APGIPDTAAGTNGSASADVP) is disordered. A run of 5 helical transmembrane segments spans residues 344–364 (LELT…FWLL), 370–390 (ILGN…GLFF), 440–460 (LGGC…YWVL), 471–491 (WILW…PIIM), and 518–538 (PIIF…YWVV).

Belongs to the OXA1/ALB3/YidC family. Type 1 subfamily. In terms of assembly, interacts with the Sec translocase complex via SecD. Specifically interacts with transmembrane segments of nascent integral membrane proteins during membrane integration.

The protein localises to the cell inner membrane. In terms of biological role, required for the insertion and/or proper folding and/or complex formation of integral membrane proteins into the membrane. Involved in integration of membrane proteins that insert both dependently and independently of the Sec translocase complex, as well as at least some lipoproteins. Aids folding of multispanning membrane proteins. This Pseudomonas savastanoi pv. phaseolicola (strain 1448A / Race 6) (Pseudomonas syringae pv. phaseolicola (strain 1448A / Race 6)) protein is Membrane protein insertase YidC.